A 136-amino-acid chain; its full sequence is uncharacterized protein (136 aa).

Residues 1 to 51 form a disordered region; that stretch reads MAANATSGRPPSIALRQPEATGWRRGIPAKVATKGTQAEREGDVRSGGRAR. Residues 37–46 show a composition bias toward basic and acidic residues; sequence QAEREGDVRS.

This is an uncharacterized protein from Homo sapiens (Human).